Reading from the N-terminus, the 462-residue chain is tRNA-2-methylthio-N(6)-dimethylallyladenosine synthase (462 aa).

In terms of domain architecture, MTTase N-terminal spans 2 to 117 (KRYFIHTFGC…LPDIIGRVSA (116 aa)). Residues Cys-11, Cys-47, Cys-80, Cys-157, Cys-161, and Cys-164 each coordinate [4Fe-4S] cluster. One can recognise a Radical SAM core domain in the interval 143–372 (SRGKVTEFVT…QKLQRRISGE (230 aa)). Residues 375–437 (AALVGSEVEV…PNQLAGKQVA (63 aa)) enclose the TRAM domain.

The protein belongs to the methylthiotransferase family. MiaB subfamily. As to quaternary structure, monomer. [4Fe-4S] cluster is required as a cofactor.

It localises to the cytoplasm. The catalysed reaction is N(6)-dimethylallyladenosine(37) in tRNA + (sulfur carrier)-SH + AH2 + 2 S-adenosyl-L-methionine = 2-methylsulfanyl-N(6)-dimethylallyladenosine(37) in tRNA + (sulfur carrier)-H + 5'-deoxyadenosine + L-methionine + A + S-adenosyl-L-homocysteine + 2 H(+). In terms of biological role, catalyzes the methylthiolation of N6-(dimethylallyl)adenosine (i(6)A), leading to the formation of 2-methylthio-N6-(dimethylallyl)adenosine (ms(2)i(6)A) at position 37 in tRNAs that read codons beginning with uridine. The chain is tRNA-2-methylthio-N(6)-dimethylallyladenosine synthase from Myxococcus xanthus (strain DK1622).